We begin with the raw amino-acid sequence, 379 residues long: Leukocyte elastase inhibitor (379 aa).

Position 1 is an N-acetylmethionine (M1). N6-acetyllysine is present on residues K137 and K177. Residues 351–379 (NFNADHPFIFFIRHNPSANILFLGRFSSP) are CARD-binding motif (CBM).

Belongs to the serpin family. Ov-serpin subfamily. Monomer. Interacts (via C-terminus) with CASP1; CASP4 (via CARD domain) and CASP5; these interactions regulate the activity of inflammatory caspases. Interacts with PRTN3. Interacts with GZMH. Interacts with TMSB4. The N-terminus is blocked.

It localises to the secreted. The protein localises to the cytoplasm. It is found in the cytolytic granule. The protein resides in the early endosome. In terms of biological role, neutrophil serine protease inhibitor that plays an essential role in the regulation of the innate immune response, inflammation and cellular homeostasis. Acts primarily to protect the cell from proteases released in the cytoplasm during stress or infection. These proteases are important in killing microbes but when released from granules, these potent enzymes also destroy host proteins and contribute to mortality. Regulates the activity of the neutrophil proteases elastase, cathepsin G, proteinase-3, chymase, chymotrypsin, and kallikrein-3. Also acts as a potent intracellular inhibitor of GZMH by directly blocking its proteolytic activity. During inflammation, limits the activity of inflammatory caspases CASP1, CASP4 and CASP5 by suppressing their caspase-recruitment domain (CARD) oligomerization and enzymatic activation. When secreted, promotes the proliferation of beta-cells via its protease inhibitory function. In Equus caballus (Horse), this protein is Leukocyte elastase inhibitor (SERPINB1).